Reading from the N-terminus, the 469-residue chain is 6-phosphofructo-2-kinase/fructose-2,6-bisphosphatase 4 (469 aa).

Positions 1 to 249 (MASPRELTQN…YYLMNIHVTP (249 aa)) are 6-phosphofructo-2-kinase. At S29 the chain carries Phosphoserine; by PKC. 46-54 (GLPARGKTY) contributes to the ATP binding site. R79 and R103 together coordinate beta-D-fructose 6-phosphate. D129 is a catalytic residue. Beta-D-fructose 6-phosphate-binding residues include T131 and R137. C159 is a catalytic residue. 168–173 (NIVQVK) contributes to the ATP binding site. Beta-D-fructose 6-phosphate contacts are provided by K173, R194, and Y198. Residues 250 to 469 (RSIYLCRHGE…EALVTVPAHQ (220 aa)) are fructose-2,6-bisphosphatase. A beta-D-fructose 2,6-bisphosphate-binding site is contributed by R256. H257 functions as the Tele-phosphohistidine intermediate in the catalytic mechanism. Positions 263, 269, and 306 each coordinate beta-D-fructose 2,6-bisphosphate. Residue E326 is the Proton donor/acceptor of the active site. Beta-D-fructose 2,6-bisphosphate contacts are provided by Y337, R351, K355, Y366, Q392, and R396. 348–351 (FALR) is a binding site for ATP. ATP is bound by residues 392–396 (QAVMR) and Y428. T444 carries the phosphothreonine; by PKC modification.

In the C-terminal section; belongs to the phosphoglycerate mutase family. In terms of assembly, homodimer. Testis.

The enzyme catalyses beta-D-fructose 2,6-bisphosphate + H2O = beta-D-fructose 6-phosphate + phosphate. It carries out the reaction beta-D-fructose 6-phosphate + ATP = beta-D-fructose 2,6-bisphosphate + ADP + H(+). Its activity is regulated as follows. The most important regulatory mechanism of these opposing activities is by phosphorylation and dephosphorylation of the enzyme. Functionally, synthesis and degradation of fructose 2,6-bisphosphate. The protein is 6-phosphofructo-2-kinase/fructose-2,6-bisphosphatase 4 (Pfkfb4) of Rattus norvegicus (Rat).